Reading from the N-terminus, the 482-residue chain is tRNA sulfurtransferase (482 aa).

Residues 61-165 (LAIRDALTRI…DDRLLLIKGR (105 aa)) enclose the THUMP domain. Residues 183–184 (LI), Lys265, Gly287, and Gln296 each bind ATP. Cys344 and Cys456 are joined by a disulfide. Residues 404 to 482 (FGPNDVILDI…GFNNVKVYRP (79 aa)) enclose the Rhodanese domain. Cys456 (cysteine persulfide intermediate) is an active-site residue.

It belongs to the ThiI family.

It localises to the cytoplasm. It catalyses the reaction [ThiI sulfur-carrier protein]-S-sulfanyl-L-cysteine + a uridine in tRNA + 2 reduced [2Fe-2S]-[ferredoxin] + ATP + H(+) = [ThiI sulfur-carrier protein]-L-cysteine + a 4-thiouridine in tRNA + 2 oxidized [2Fe-2S]-[ferredoxin] + AMP + diphosphate. It carries out the reaction [ThiS sulfur-carrier protein]-C-terminal Gly-Gly-AMP + S-sulfanyl-L-cysteinyl-[cysteine desulfurase] + AH2 = [ThiS sulfur-carrier protein]-C-terminal-Gly-aminoethanethioate + L-cysteinyl-[cysteine desulfurase] + A + AMP + 2 H(+). It functions in the pathway cofactor biosynthesis; thiamine diphosphate biosynthesis. Its function is as follows. Catalyzes the ATP-dependent transfer of a sulfur to tRNA to produce 4-thiouridine in position 8 of tRNAs, which functions as a near-UV photosensor. Also catalyzes the transfer of sulfur to the sulfur carrier protein ThiS, forming ThiS-thiocarboxylate. This is a step in the synthesis of thiazole, in the thiamine biosynthesis pathway. The sulfur is donated as persulfide by IscS. In Shigella sonnei (strain Ss046), this protein is tRNA sulfurtransferase.